A 373-amino-acid polypeptide reads, in one-letter code: Chorismate synthase (373 aa).

Arg46 provides a ligand contact to NADP(+). FMN is bound by residues 123-125 (RSS), 251-252 (NA), Gly295, 310-314 (KPTPS), and Arg337.

This sequence belongs to the chorismate synthase family. Requires FMNH2 as cofactor.

The catalysed reaction is 5-O-(1-carboxyvinyl)-3-phosphoshikimate = chorismate + phosphate. It participates in metabolic intermediate biosynthesis; chorismate biosynthesis; chorismate from D-erythrose 4-phosphate and phosphoenolpyruvate: step 7/7. Functionally, catalyzes the anti-1,4-elimination of the C-3 phosphate and the C-6 proR hydrogen from 5-enolpyruvylshikimate-3-phosphate (EPSP) to yield chorismate, which is the branch point compound that serves as the starting substrate for the three terminal pathways of aromatic amino acid biosynthesis. This reaction introduces a second double bond into the aromatic ring system. The protein is Chorismate synthase of Methanococcus maripaludis (strain C5 / ATCC BAA-1333).